We begin with the raw amino-acid sequence, 593 residues long: Eukaryotic peptide chain release factor subunit 1 (593 aa).

The protein belongs to the eukaryotic release factor 1 family. Heterodimer of two subunits, one of which binds GTP.

It localises to the cytoplasm. Functionally, directs the termination of nascent peptide synthesis (translation) in response to the termination codons UAA, UAG and UGA. The sequence is that of Eukaryotic peptide chain release factor subunit 1 from Caenorhabditis elegans.